Consider the following 466-residue polypeptide: Asparagine--tRNA ligase (466 aa).

The protein belongs to the class-II aminoacyl-tRNA synthetase family. In terms of assembly, homodimer.

It is found in the cytoplasm. The catalysed reaction is tRNA(Asn) + L-asparagine + ATP = L-asparaginyl-tRNA(Asn) + AMP + diphosphate + H(+). The polypeptide is Asparagine--tRNA ligase (Yersinia enterocolitica serotype O:8 / biotype 1B (strain NCTC 13174 / 8081)).